The following is a 499-amino-acid chain: tRNA (guanine(37)-N(1))-methyltransferase (499 aa).

The transit peptide at 1–44 (MKIALPVFQKFNRLISSCKMSGVFPYNPPVNRQMRELDRSFFIT) directs the protein to the mitochondrion. S-adenosyl-L-methionine-binding positions include His268, 307 to 308 (DL), 335 to 336 (DG), and Asn399.

Belongs to the class I-like SAM-binding methyltransferase superfamily. TRM5/TYW2 family. In terms of assembly, monomer.

It localises to the mitochondrion matrix. Its subcellular location is the nucleus. The protein localises to the cytoplasm. It catalyses the reaction guanosine(37) in tRNA + S-adenosyl-L-methionine = N(1)-methylguanosine(37) in tRNA + S-adenosyl-L-homocysteine + H(+). Its function is as follows. Specifically methylates the N1 position of guanosine-37 in various cytoplasmic and mitochondrial tRNAs. Methylation is not dependent on the nature of the nucleoside 5' of the target nucleoside. This is the first step in the biosynthesis of wybutosine (yW), a modified base adjacent to the anticodon of tRNAs and required for accurate decoding. Postspliced cytoplasmic tRNAs are imported into the nucleus, where this first step seems to take place, after which they are reexported to the cytoplasm, where the yW sythesis is completed by cytoplasmic enzymes. This chain is tRNA (guanine(37)-N(1))-methyltransferase, found in Saccharomyces cerevisiae (strain ATCC 204508 / S288c) (Baker's yeast).